The following is a 378-amino-acid chain: Cytochrome P450 2C15 (378 aa).

A heme-binding site is contributed by Cys323.

It belongs to the cytochrome P450 family. It depends on heme as a cofactor.

It is found in the endoplasmic reticulum membrane. The protein resides in the microsome membrane. It catalyses the reaction an organic molecule + reduced [NADPH--hemoprotein reductase] + O2 = an alcohol + oxidized [NADPH--hemoprotein reductase] + H2O + H(+). Functionally, cytochromes P450 are a group of heme-thiolate monooxygenases. In liver microsomes, this enzyme is involved in an NADPH-dependent electron transport pathway. It oxidizes a variety of structurally unrelated compounds, including steroids, fatty acids, and xenobiotics. In Oryctolagus cuniculus (Rabbit), this protein is Cytochrome P450 2C15 (CYP2C15).